Reading from the N-terminus, the 515-residue chain is 2,3-bisphosphoglycerate-independent phosphoglycerate mutase (515 aa).

2 residues coordinate Mn(2+): aspartate 14 and serine 64. Serine 64 serves as the catalytic Phosphoserine intermediate. Substrate contacts are provided by residues histidine 125, 155-156, arginine 187, arginine 193, 263-266, and lysine 337; these read RD and RADR. Aspartate 404, histidine 408, aspartate 445, histidine 446, and histidine 464 together coordinate Mn(2+).

It belongs to the BPG-independent phosphoglycerate mutase family. As to quaternary structure, monomer. Mn(2+) serves as cofactor.

The catalysed reaction is (2R)-2-phosphoglycerate = (2R)-3-phosphoglycerate. It participates in carbohydrate degradation; glycolysis; pyruvate from D-glyceraldehyde 3-phosphate: step 3/5. Catalyzes the interconversion of 2-phosphoglycerate and 3-phosphoglycerate. This chain is 2,3-bisphosphoglycerate-independent phosphoglycerate mutase, found in Yersinia pseudotuberculosis serotype O:1b (strain IP 31758).